Consider the following 2824-residue polypeptide: Highly reducing polyketide synthase stpks1 (2824 aa).

The Ketosynthase family 3 (KS3) domain maps to 8–428 (PKPVAVVGIS…GANGHVIAES (421 aa)). Residues Cys177, His312, and His348 each act as for beta-ketoacyl synthase activity in the active site. A malonyl-CoA:ACP transacylase (MAT) domain region spans residues 517–854 (QLVFVFSGQG…LTAVGNLSTL (338 aa)). The active-site For malonyltransferase activity is Ser616. Positions 886–1004 (MPFYSESSEL…GFMTTEVMDK (119 aa)) are N-terminal hotdog fold. A PKS/mFAS DH domain is found at 886-1168 (MPFYSESSEL…SKHWTGAVPT (283 aa)). The tract at residues 894–1083 (ELAVKMKRSR…PSLLDSCIHG (190 aa)) is dehydratase (DH) domain. His925 acts as the Proton acceptor; for dehydratase activity in catalysis. The tract at residues 1018 to 1168 (TTPADISNLY…SKHWTGAVPT (151 aa)) is C-terminal hotdog fold. Asp1078 acts as the Proton donor; for dehydratase activity in catalysis. The methyltransferase (CMet) domain stretch occupies residues 1101–1449 (PSHIGRVTLY…KFQVVDGAQD (349 aa)). The segment at 1213 to 1232 (APPSANGHANGHANGSANGS) is disordered. The segment at 1518-1840 (TGTFDGAVAT…LPSDFSVSQS (323 aa)) is enoyl reductase (ER) domain. Residues 1842-2096 (ALADDKTYLV…SESVLYNHLV (255 aa)) are ketoreductase (KR) domain. The Carrier domain occupies 2109–2196 (DPYEVLQEIV…TAVSTAEKPF (88 aa)). The segment at 2200-2414 (AMHQPGQTIL…WASSDATTRM (215 aa)) is thioesterase (TE) domain. The tract at residues 2608 to 2809 (YRQNKVFTSM…ATGYSNVQVC (202 aa)) is methyltransferase (CMet) domain.

It functions in the pathway mycotoxin biosynthesis. Highly reducing polyketide synthase; part of the gene cluster that mediates the biosynthesis of strobilurin A, an antifungal polyketide that contains a key beta-methoxyacrylate toxophore that targets the complex III of the mitochondrial electron transport chain. Strobilurin biosynthesis begins with construction of benzoyl CoA by step-wise elimination of ammonia from phenylalanine by the phenylalanine ammonia-lyase str11, oxygenation by str8 and retro-Claisen reaction to form benzoic acid, which is activated to its CoA thiolester benzoyl CoA by the dedicated CoA ligase str10. Benzoyl CoA forms the starter unit for the highly reducing polyketide synthase stpks1 that produces the polyketide prestrobilutin A. The FAD-dependent oxygenase str9 then catalyzes the key oxidative rearrangement responsible for the creation of the beta-methoxyacrylate toxophore. Str9 performs epoxidation of the 2,3 olefin of prestrobilutin A, followed by Meinwald rearrangement to furnish the aldehyde intermediate. Rapid enolization of the aldehyde intermediate would give the beta-methoxyacrylate skeleton and methylations catalyzed by str2 and str3 complete the synthesis and lead to the production of strobilurin A. The short-chain dehydrogenase stl2 and the dehydrogenase str4 play a role in the shunt pathway leading to the production of bolineol. The cluster encodes no obvious halogenase gene that could be involved in production of strobilurin B, nor any obvious dimethylallyl-transferase that could be involved in the production of strobilurin G. It is possible that unknown proteins encoded in, or near, the cluster (such as str1 or stl1) may form new classes of halogenases or dimethylally-transferases, or that the responsible genes are located elsewhere on the genome. Similarly, proteins encoded by str5/str6 hydrolases appear to have no chemical role in the biosynthesis of strobilurin A. Finally, no obvious self-resistance gene is found within the cluster. This chain is Highly reducing polyketide synthase stpks1, found in Strobilurus tenacellus.